The chain runs to 435 residues: Eukaryotic peptide chain release factor subunit 1-3 (435 aa).

Ala-2 bears the N-acetylalanine mark.

Belongs to the eukaryotic release factor 1 family. Heterodimer of two subunits, one of which binds GTP.

The protein localises to the cytoplasm. In terms of biological role, directs the termination of nascent peptide synthesis (translation) in response to the termination codons UAA, UAG and UGA. Modulates plant growth and development. The polypeptide is Eukaryotic peptide chain release factor subunit 1-3 (ERF1-3) (Arabidopsis thaliana (Mouse-ear cress)).